Reading from the N-terminus, the 370-residue chain is Integrin-linked kinase-associated serine/threonine phosphatase 2C (370 aa).

Met-1 is modified (N-acetylmethionine). The disordered stretch occupies residues Met-1–Glu-69. A Phosphoserine modification is found at Ser-13. Low complexity predominate over residues Ser-33 to Ser-45. Residues Glu-46 to Glu-69 are compositionally biased toward basic and acidic residues. The PPM-type phosphatase domain occupies Lys-86–Ile-368. Asp-130 and Gly-131 together coordinate Mn(2+). Lys-188 carries the N6-acetyllysine modification. The Mn(2+) site is built by Asp-304 and Asp-359.

Belongs to the PP2C family. As to quaternary structure, interacts with ILK. Mg(2+) serves as cofactor. It depends on Mn(2+) as a cofactor.

Its subcellular location is the cytoplasm. The enzyme catalyses O-phospho-L-seryl-[protein] + H2O = L-seryl-[protein] + phosphate. It carries out the reaction O-phospho-L-threonyl-[protein] + H2O = L-threonyl-[protein] + phosphate. In terms of biological role, protein phosphatase that may play a role in regulation of cell cycle progression via dephosphorylation of its substrates whose appropriate phosphorylation states might be crucial for cell proliferation. Selectively associates with integrin linked kinase (ILK), to modulate cell adhesion and growth factor signaling. Inhibits the ILK-GSK3B signaling axis and may play an important role in inhibiting oncogenic transformation. This Bos taurus (Bovine) protein is Integrin-linked kinase-associated serine/threonine phosphatase 2C (ILKAP).